Consider the following 502-residue polypeptide: ATP synthase subunit alpha (502 aa).

Residue 169-176 (GDRQTGKT) coordinates ATP.

It belongs to the ATPase alpha/beta chains family. F-type ATPases have 2 components, CF(1) - the catalytic core - and CF(0) - the membrane proton channel. CF(1) has five subunits: alpha(3), beta(3), gamma(1), delta(1), epsilon(1). CF(0) has three main subunits: a(1), b(2) and c(9-12). The alpha and beta chains form an alternating ring which encloses part of the gamma chain. CF(1) is attached to CF(0) by a central stalk formed by the gamma and epsilon chains, while a peripheral stalk is formed by the delta and b chains.

It is found in the cell inner membrane. The enzyme catalyses ATP + H2O + 4 H(+)(in) = ADP + phosphate + 5 H(+)(out). In terms of biological role, produces ATP from ADP in the presence of a proton gradient across the membrane. The alpha chain is a regulatory subunit. The chain is ATP synthase subunit alpha from Thermodesulfovibrio yellowstonii (strain ATCC 51303 / DSM 11347 / YP87).